We begin with the raw amino-acid sequence, 411 residues long: Multifunctional CCA protein (411 aa).

ATP-binding residues include glycine 8 and arginine 11. Residues glycine 8 and arginine 11 each contribute to the CTP site. Residues glutamate 21 and aspartate 23 each contribute to the Mg(2+) site. Positions 91, 137, and 140 each coordinate ATP. 3 residues coordinate CTP: arginine 91, arginine 137, and arginine 140. The 102-residue stretch at 228–329 folds into the HD domain; the sequence is TGVHALLALE…LKTLLALDGL (102 aa).

This sequence belongs to the tRNA nucleotidyltransferase/poly(A) polymerase family. Bacterial CCA-adding enzyme type 1 subfamily. In terms of assembly, monomer. Can also form homodimers and oligomers. Mg(2+) is required as a cofactor. Requires Ni(2+) as cofactor.

It carries out the reaction a tRNA precursor + 2 CTP + ATP = a tRNA with a 3' CCA end + 3 diphosphate. The catalysed reaction is a tRNA with a 3' CCA end + 2 CTP + ATP = a tRNA with a 3' CCACCA end + 3 diphosphate. Functionally, catalyzes the addition and repair of the essential 3'-terminal CCA sequence in tRNAs without using a nucleic acid template. Adds these three nucleotides in the order of C, C, and A to the tRNA nucleotide-73, using CTP and ATP as substrates and producing inorganic pyrophosphate. tRNA 3'-terminal CCA addition is required both for tRNA processing and repair. Also involved in tRNA surveillance by mediating tandem CCA addition to generate a CCACCA at the 3' terminus of unstable tRNAs. While stable tRNAs receive only 3'-terminal CCA, unstable tRNAs are marked with CCACCA and rapidly degraded. The chain is Multifunctional CCA protein from Teredinibacter turnerae (strain ATCC 39867 / T7901).